The primary structure comprises 1384 residues: Sterol 3-beta-glucosyltransferase (1384 aa).

Disordered stretches follow at residues 1 to 64, 86 to 189, and 204 to 229; these read MPNM…DGQL, ARFD…TPRA, and DKKQSADQPSSSTKGETDGTSEQSCA. A compositionally biased stretch (basic and acidic residues) spans 7–19; the sequence is LLEDAKRRVDRRL. Low complexity predominate over residues 21-36; sequence ASRQSISSSRIFSSAF. Over residues 38–47 the composition is skewed to basic and acidic residues; that stretch reads DRLKDDHDAQ. Over residues 146-156 the composition is skewed to low complexity; sequence LRSLKPSPKSS. Positions 158 to 172 are enriched in polar residues; sequence GTETTVQTEPPTSDE. Over residues 174-189 the composition is skewed to low complexity; sequence SPLASPRRARSATPRA. Residues 209-229 show a composition bias toward polar residues; that stretch reads ADQPSSSTKGETDGTSEQSCA. One can recognise a GRAM 1 domain in the interval 237 to 284; the sequence is KEMFGFEMPEKVLMEYACSLLQNILLQGYMYVTEGHICFYAYLPRKSA. In terms of domain architecture, PH spans 285–384; the sequence is VTIRSGYLHK…WVKALQKVIF (100 aa). Disordered regions lie at residues 457 to 526 and 560 to 629; these read MKTS…RQRD and NRSD…VNSS. 3 stretches are compositionally biased toward polar residues: residues 458–473, 483–494, and 560–572; these read KTSQLLPPPSEQTSPA, WSLNSDLSQSRG, and NRSDVFQSPTIHT. The segment covering 578–588 has biased composition (basic and acidic residues); it reads PSGDRTGRRLS. Residues 604–629 are compositionally biased toward polar residues; it reads RNGQEMQYASSDSDQGTQHPSKVNSS. The GRAM 2 domain occupies 714–817; that stretch reads RFRAHFALPS…RDDCAVTVHQ (104 aa). Residues serine 901, arginine 902, aspartate 904, alanine 1204, histidine 1206, histidine 1219, glycine 1223, threonine 1224, aspartate 1243, and glutamine 1244 each contribute to the UDP-alpha-D-glucose site. Residues 1322 to 1336 are compositionally biased toward polar residues; it reads VSSTPFSPTPSAKTT. Residues 1322–1350 form a disordered region; it reads VSSTPFSPTPSAKTTAEQEEDDVDDSEEW. A compositionally biased stretch (acidic residues) spans 1338-1350; the sequence is EQEEDDVDDSEEW.

This sequence belongs to the glycosyltransferase 28 family.

The protein resides in the cytoplasm. The protein localises to the preautophagosomal structure membrane. The catalysed reaction is a sterol + UDP-alpha-D-glucose = a sterol 3-beta-D-glucoside + UDP + H(+). The enzyme catalyses ergosterol + UDP-alpha-D-glucose = ergosteryl 3-beta-D-glucoside + UDP + H(+). Sterol glycosyltransferase responsible for the glycosylation of ergosterol to form ergosterol-glucoside. Involved in cytoplasm to vacuole transport (Cvt), pexophagy or nonselective autophagy. This chain is Sterol 3-beta-glucosyltransferase, found in Aspergillus oryzae (strain ATCC 42149 / RIB 40) (Yellow koji mold).